The primary structure comprises 87 residues: Small ribosomal subunit protein uS15c (87 aa).

This sequence belongs to the universal ribosomal protein uS15 family. In terms of assembly, part of the 30S ribosomal subunit.

It is found in the plastid. The protein resides in the chloroplast. The chain is Small ribosomal subunit protein uS15c (rps15) from Solanum bulbocastanum (Wild potato).